Here is a 206-residue protein sequence, read N- to C-terminus: A-type ATP synthase subunit E (206 aa).

The protein belongs to the V-ATPase E subunit family. Has multiple subunits with at least A(3), B(3), C, D, E, F, H, I and proteolipid K(x).

It localises to the cell membrane. Component of the A-type ATP synthase that produces ATP from ADP in the presence of a proton gradient across the membrane. This chain is A-type ATP synthase subunit E, found in Methanothermobacter thermautotrophicus (strain ATCC 29096 / DSM 1053 / JCM 10044 / NBRC 100330 / Delta H) (Methanobacterium thermoautotrophicum).